The sequence spans 268 residues: MADS-box protein FBP24 (268 aa).

The region spanning 4–64 is the MADS-box domain; that stretch reads MGRGKIEVKR…GKLFEYCSQP (61 aa). One can recognise a K-box domain in the interval 88–178; that stretch reads RVQLYDEVAK…YQWLMNNQMY (91 aa). Residues 243–268 are disordered; sequence NSISPYRLQPSHPNLQDSHVHGPSYD.

It localises to the nucleus. Probable transcription factor. The polypeptide is MADS-box protein FBP24 (FBP24) (Petunia hybrida (Petunia)).